A 304-amino-acid chain; its full sequence is Glutaminase (304 aa).

Residues serine 63, asparagine 114, glutamate 158, asparagine 165, tyrosine 189, tyrosine 240, and valine 258 each contribute to the substrate site.

Belongs to the glutaminase family. Homotetramer.

The catalysed reaction is L-glutamine + H2O = L-glutamate + NH4(+). The chain is Glutaminase from Shewanella sp. (strain ANA-3).